The chain runs to 621 residues: 1-deoxy-D-xylulose-5-phosphate synthase (621 aa).

Residues H76 and A117 to S119 each bind thiamine diphosphate. D148 provides a ligand contact to Mg(2+). Thiamine diphosphate-binding positions include G149 to A150, N178, Y285, and E367. N178 contacts Mg(2+).

The protein belongs to the transketolase family. DXPS subfamily. Homodimer. Mg(2+) is required as a cofactor. Requires thiamine diphosphate as cofactor.

The enzyme catalyses D-glyceraldehyde 3-phosphate + pyruvate + H(+) = 1-deoxy-D-xylulose 5-phosphate + CO2. It participates in metabolic intermediate biosynthesis; 1-deoxy-D-xylulose 5-phosphate biosynthesis; 1-deoxy-D-xylulose 5-phosphate from D-glyceraldehyde 3-phosphate and pyruvate: step 1/1. Functionally, catalyzes the acyloin condensation reaction between C atoms 2 and 3 of pyruvate and glyceraldehyde 3-phosphate to yield 1-deoxy-D-xylulose-5-phosphate (DXP). The sequence is that of 1-deoxy-D-xylulose-5-phosphate synthase from Aromatoleum aromaticum (strain DSM 19018 / LMG 30748 / EbN1) (Azoarcus sp. (strain EbN1)).